Reading from the N-terminus, the 315-residue chain is DNA-directed RNA polymerase subunit alpha (315 aa).

Residues Met1–Ser228 form an alpha N-terminal domain (alpha-NTD) region. Positions Lys245–Asp315 are alpha C-terminal domain (alpha-CTD).

It belongs to the RNA polymerase alpha chain family. Homodimer. The RNAP catalytic core consists of 2 alpha, 1 beta, 1 beta' and 1 omega subunit. When a sigma factor is associated with the core the holoenzyme is formed, which can initiate transcription.

The enzyme catalyses RNA(n) + a ribonucleoside 5'-triphosphate = RNA(n+1) + diphosphate. DNA-dependent RNA polymerase catalyzes the transcription of DNA into RNA using the four ribonucleoside triphosphates as substrates. The polypeptide is DNA-directed RNA polymerase subunit alpha (Acetivibrio thermocellus (strain ATCC 27405 / DSM 1237 / JCM 9322 / NBRC 103400 / NCIMB 10682 / NRRL B-4536 / VPI 7372) (Clostridium thermocellum)).